The chain runs to 201 residues: ATP synthase subunit delta, chloroplastic (201 aa).

This sequence belongs to the ATPase delta chain family. F-type ATPases have 2 components, F(1) - the catalytic core - and F(0) - the membrane proton channel. F(1) has five subunits: alpha(3), beta(3), gamma(1), delta(1), epsilon(1). CF(0) has four main subunits: a(1), b(1), b'(1) and c(10-14). The alpha and beta chains form an alternating ring which encloses part of the gamma chain. F(1) is attached to F(0) by a central stalk formed by the gamma and epsilon chains, while a peripheral stalk is formed by the delta, b and b' chains.

It is found in the plastid. It localises to the chloroplast thylakoid membrane. Its function is as follows. F(1)F(0) ATP synthase produces ATP from ADP in the presence of a proton or sodium gradient. F-type ATPases consist of two structural domains, F(1) containing the extramembraneous catalytic core and F(0) containing the membrane proton channel, linked together by a central stalk and a peripheral stalk. During catalysis, ATP synthesis in the catalytic domain of F(1) is coupled via a rotary mechanism of the central stalk subunits to proton translocation. This protein is part of the stalk that links CF(0) to CF(1). It either transmits conformational changes from CF(0) to CF(1) or is implicated in proton conduction. The protein is ATP synthase subunit delta, chloroplastic of Vaucheria litorea (Yellow-green alga).